Here is a 233-residue protein sequence, read N- to C-terminus: Nucleoside diphosphate kinase 2, chloroplastic (233 aa).

The transit peptide at 1–67 (MEAMSGLSSP…LISHSLPRKK (67 aa)) directs the protein to the chloroplast. ATP is bound by residues Lys93, Phe141, Arg169, Thr175, Arg186, and Asn196. Catalysis depends on His199, which acts as the Pros-phosphohistidine intermediate.

It belongs to the NDK family. It depends on Mg(2+) as a cofactor.

It localises to the plastid. The protein localises to the chloroplast. It catalyses the reaction a 2'-deoxyribonucleoside 5'-diphosphate + ATP = a 2'-deoxyribonucleoside 5'-triphosphate + ADP. The catalysed reaction is a ribonucleoside 5'-diphosphate + ATP = a ribonucleoside 5'-triphosphate + ADP. Its function is as follows. Major role in the synthesis of nucleoside triphosphates other than ATP. The ATP gamma phosphate is transferred to the NDP beta phosphate via a ping-pong mechanism, using a phosphorylated active-site intermediate. The chain is Nucleoside diphosphate kinase 2, chloroplastic (NDPK2) from Spinacia oleracea (Spinach).